The primary structure comprises 234 residues: Ribosomal RNA small subunit methyltransferase G (234 aa).

Residues G85, F90, and R155 each coordinate S-adenosyl-L-methionine.

The protein belongs to the methyltransferase superfamily. RNA methyltransferase RsmG family.

It is found in the cytoplasm. It catalyses the reaction guanosine(527) in 16S rRNA + S-adenosyl-L-methionine = N(7)-methylguanosine(527) in 16S rRNA + S-adenosyl-L-homocysteine. Its function is as follows. Specifically methylates the N7 position of guanine in position 527 of 16S rRNA. The chain is Ribosomal RNA small subunit methyltransferase G from Rhodopseudomonas palustris (strain BisB18).